The chain runs to 54 residues: Ovomucoid (54 aa).

Residues 4–54 (VDCSDHPKPVCSLEYMPLCGSDSKTYSNKCDFCNAVVESNGTLTLSHFGKC) enclose the Kazal-like domain. 3 disulfide bridges follow: C6–C36, C14–C33, and C22–C54. N-linked (GlcNAc...) asparagine glycosylation is present at N43.

Its subcellular location is the secreted. The protein is Ovomucoid of Rhea americana (Greater rhea).